Reading from the N-terminus, the 540-residue chain is MPTINLNKWILQDMTGLNEQELVDYLFKLKSEVSPVSQDEYSIEVNADRLDMLSLGGIVRALKGITGKELGEPSYPVKDTDYVLEVEKVASRPYALACVIYNVKLSPDFYLKELIQFQEKLHDTIGRRRKKVAIGIHDLEKVEGKIIRYAPVSLSTTFIPLNQEREMSVRDVLQETPQGKQYGNISVWDSNSPAIMDERGILSVPPVINSDRTKITGNTKSLLIDVTGTNFESVMETMDLLATALAELGGIIGRVKVRGMSVDRSPVLRHTSVPFSLDDVNKRLGIHVSRDEAINLIRMMRMEVETNKDLAVIVPPYRVDIMNYTDVAEDIAMAYGYDRFTLESGRTASRGSLSEKSEIYRKLRTLLVGAGFQEVYTLVLTKSSYQRGEAVNIANPISVEYDSVRNSLLWNSLVFLSNNQHSRFPVRIFEIGDVVNRDDSKDTKYSNSTRLSMAIMDSRVSYEMLQAPLHEVLLNLLGVAPSYRRFESDIFMKGRSAEVVVKGETIGRLGEANPELLRSFGLLYPVLLAELDLDALRRVM.

Residues 268–342 enclose the B5 domain; the sequence is LRHTSVPFSL…MAYGYDRFTL (75 aa). Residues aspartate 320, aspartate 326, glutamate 329, and aspartate 330 each contribute to the Mg(2+) site.

It belongs to the phenylalanyl-tRNA synthetase beta subunit family. Type 2 subfamily. In terms of assembly, tetramer of two alpha and two beta subunits. Mg(2+) is required as a cofactor.

The protein resides in the cytoplasm. It catalyses the reaction tRNA(Phe) + L-phenylalanine + ATP = L-phenylalanyl-tRNA(Phe) + AMP + diphosphate + H(+). This is Phenylalanine--tRNA ligase beta subunit from Metallosphaera sedula (strain ATCC 51363 / DSM 5348 / JCM 9185 / NBRC 15509 / TH2).